A 380-amino-acid chain; its full sequence is Cytochrome b (380 aa).

The next 4 helical transmembrane spans lie at 34–54 (FGSL…LLAM), 78–99 (WLIR…FLHI), 114–134 (WNTG…GYVL), and 179–199 (FFAL…IHLT). Residues H84 and H98 each coordinate heme b. 2 residues coordinate heme b: H183 and H197. H202 lines the a ubiquinone pocket. 4 helical membrane-spanning segments follow: residues 227–247 (FKDI…ALFS), 289–309 (LGGV…PFLH), 321–341 (LSQT…WIGS), and 348–368 (FIII…ILFP).

The protein belongs to the cytochrome b family. The cytochrome bc1 complex contains 11 subunits: 3 respiratory subunits (MT-CYB, CYC1 and UQCRFS1), 2 core proteins (UQCRC1 and UQCRC2) and 6 low-molecular weight proteins (UQCRH/QCR6, UQCRB/QCR7, UQCRQ/QCR8, UQCR10/QCR9, UQCR11/QCR10 and a cleavage product of UQCRFS1). This cytochrome bc1 complex then forms a dimer. The cofactor is heme b.

Its subcellular location is the mitochondrion inner membrane. Its function is as follows. Component of the ubiquinol-cytochrome c reductase complex (complex III or cytochrome b-c1 complex) that is part of the mitochondrial respiratory chain. The b-c1 complex mediates electron transfer from ubiquinol to cytochrome c. Contributes to the generation of a proton gradient across the mitochondrial membrane that is then used for ATP synthesis. This is Cytochrome b (MT-CYB) from Gallus gallus (Chicken).